The sequence spans 263 residues: Thymidylate synthase (263 aa).

Residues Arg25 and 123–124 each bind dUMP; that span reads RR. Cys143 (nucleophile) is an active-site residue. DUMP-binding positions include 163-166, Asn174, and 204-206; these read RSGD and HIY. Asp166 provides a ligand contact to (6R)-5,10-methylene-5,6,7,8-tetrahydrofolate. Residue Ser262 coordinates (6R)-5,10-methylene-5,6,7,8-tetrahydrofolate.

Belongs to the thymidylate synthase family. Bacterial-type ThyA subfamily. As to quaternary structure, homodimer.

Its subcellular location is the cytoplasm. It carries out the reaction dUMP + (6R)-5,10-methylene-5,6,7,8-tetrahydrofolate = 7,8-dihydrofolate + dTMP. Its pathway is pyrimidine metabolism; dTTP biosynthesis. Catalyzes the reductive methylation of 2'-deoxyuridine-5'-monophosphate (dUMP) to 2'-deoxythymidine-5'-monophosphate (dTMP) while utilizing 5,10-methylenetetrahydrofolate (mTHF) as the methyl donor and reductant in the reaction, yielding dihydrofolate (DHF) as a by-product. This enzymatic reaction provides an intracellular de novo source of dTMP, an essential precursor for DNA biosynthesis. This chain is Thymidylate synthase, found in Clostridium beijerinckii (strain ATCC 51743 / NCIMB 8052) (Clostridium acetobutylicum).